Here is a 176-residue protein sequence, read N- to C-terminus: N5-carboxyaminoimidazole ribonucleotide mutase (176 aa).

The substrate site is built by S14, D17, and R44.

It belongs to the AIR carboxylase family. Class I subfamily.

It catalyses the reaction 5-carboxyamino-1-(5-phospho-D-ribosyl)imidazole + H(+) = 5-amino-1-(5-phospho-D-ribosyl)imidazole-4-carboxylate. Its pathway is purine metabolism; IMP biosynthesis via de novo pathway; 5-amino-1-(5-phospho-D-ribosyl)imidazole-4-carboxylate from 5-amino-1-(5-phospho-D-ribosyl)imidazole (N5-CAIR route): step 2/2. Its function is as follows. Catalyzes the conversion of N5-carboxyaminoimidazole ribonucleotide (N5-CAIR) to 4-carboxy-5-aminoimidazole ribonucleotide (CAIR). In Synechocystis sp. (strain ATCC 27184 / PCC 6803 / Kazusa), this protein is N5-carboxyaminoimidazole ribonucleotide mutase.